A 636-amino-acid chain; its full sequence is Polyadenylate-binding protein 1 (636 aa).

Methionine 1 is modified (N-acetylmethionine). RRM domains are found at residues 11-89, 99-175, 191-268, and 294-370; these read ASLY…WSQR, GNIF…RFKS, TNVY…RAQK, and VNLY…LAQR. The interval 166–289 is UNR-binding; it reads RKVFVGRFKS…FEQMKQDRIT (124 aa). Lysine 299 carries the post-translational modification N6-methyllysine. Phosphoserine is present on serine 315. Position 319 is a phosphothreonine (threonine 319). 4 positions are modified to omega-N-methylarginine: arginine 385, arginine 419, arginine 432, and arginine 436. Residues arginine 455 and arginine 460 each carry the omega-N-methylated arginine; by CARM1 modification. An omega-N-methylarginine mark is found at arginine 475 and arginine 481. The residue at position 493 (arginine 493) is an Asymmetric dimethylarginine; alternate. Position 493 is a dimethylated arginine; alternate (arginine 493). An Omega-N-methylarginine; alternate modification is found at arginine 493. At arginine 506 the chain carries Omega-N-methylarginine. Lysine 512 is modified (N6-acetyllysine). At arginine 518 the chain carries Omega-N-methylarginine. The 78-residue stretch at 542 to 619 folds into the PABC domain; it reads QEPLTASMLA…AVAVLQAHQA (78 aa).

Belongs to the polyadenylate-binding protein type-1 family. As to quaternary structure, may form homodimers. Component of a multisubunit autoregulatory ribonucleoprotein complex (ARC), at least composed of IGF2BP1, PABPC1 and CSDE1. Directly interacts with IGF2BP1. Part of a complex associated with the FOS mCRD domain and consisting of HNRPD, SYNCRIP, PAIP1 and CSDE1/UNR. Interacts with PAIP1 and PAIP2 (via the PABPC1-interacting motifs PAM1 and PAM2). Interacts with PAIP1 with a 1:1 stoichiometry and with PAIP2 with a 1:2 stoichiometry. The interaction with CSDE1 is direct and RNA-independent. Found in a mRNP complex with YBX2. Interacts with TENT2/GLD2. Identified in the spliceosome C complex. Identified in a mRNP complex, at least composed of DHX9, DDX3X, ELAVL1, HNRNPU, IGF2BP1, ILF3, PABPC1, PCBP2, PTBP2, STAU1, STAU2, SYNCRIP and YBX1. The interaction with DDX3X is direct and RNA-independent. This interaction increases in stressed cells and decreases during cell recovery. Identified in a IGF2BP1-dependent mRNP granule complex containing untranslated mRNAs. Interacts with NXF1/TAP. Interacts with PIWIL1. Interacts with AGO1, AGO2, GSPT1 and GSPT2. Interacts with LARP4B. Interacts (via the second and third RRM domains and the C-terminus) with PAIP2B (via central acidic portion and C-terminus). Forms a complex with LARP1 and SHFL. Interacts with LARP4. Interacts with ZFC3H1 in a RNase-sensitive manner. Interacts with TRIM71 (via NHL repeats) in an RNA-dependent manner. Interacts with TENT5C; the interaction has no effect on TENT5C poly(A) polymerase function. Interacts with G3BP1 and G3BP2. Interacts with ENDOV; the interaction is RNA-dependent and stimulates ENDOV activity. Interacts with UPF1; the interaction is RNA-dependent. Interacts with IGF2BP2 and IGF2BP3. May interact with SETX. Interacts with RBM46. Interacts with PAN3 isoform 1/Pan3L and isoform 3/Pan3S (via N-terminus); interaction with isoform 1 is less efficient than with isoform 3. Phosphorylated by MAPKAPK2. In terms of processing, methylated by CARM1. Arg-493 is dimethylated, probably to asymmetric dimethylarginine.

The protein localises to the cytoplasm. It is found in the stress granule. It localises to the nucleus. Its subcellular location is the cell projection. The protein resides in the lamellipodium. Its function is as follows. Binds the poly(A) tail of mRNA, including that of its own transcript, and regulates processes of mRNA metabolism such as pre-mRNA splicing and mRNA stability. Its function in translational initiation regulation can either be enhanced by PAIP1 or repressed by PAIP2. Can probably bind to cytoplasmic RNA sequences other than poly(A) in vivo. Binds to N6-methyladenosine (m6A)-containing mRNAs and contributes to MYC stability by binding to m6A-containing MYC mRNAs. Involved in translationally coupled mRNA turnover. Implicated with other RNA-binding proteins in the cytoplasmic deadenylation/translational and decay interplay of the FOS mRNA mediated by the major coding-region determinant of instability (mCRD) domain. Involved in regulation of nonsense-mediated decay (NMD) of mRNAs containing premature stop codons; for the recognition of premature termination codons (PTC) and initiation of NMD a competitive interaction between UPF1 and PABPC1 with the ribosome-bound release factors is proposed. By binding to long poly(A) tails, may protect them from uridylation by ZCCHC6/ZCCHC11 and hence contribute to mRNA stability. This chain is Polyadenylate-binding protein 1 (Pabpc1), found in Rattus norvegicus (Rat).